A 300-amino-acid polypeptide reads, in one-letter code: NAD kinase (300 aa).

Residue Asp75 is the Proton acceptor of the active site. Residues 75–76 (DG), 149–150 (ND), Arg177, Asp179, 190–195 (TAYALS), Ala214, and Gln248 each bind NAD(+).

Belongs to the NAD kinase family. A divalent metal cation is required as a cofactor.

The protein resides in the cytoplasm. It carries out the reaction NAD(+) + ATP = ADP + NADP(+) + H(+). Its function is as follows. Involved in the regulation of the intracellular balance of NAD and NADP, and is a key enzyme in the biosynthesis of NADP. Catalyzes specifically the phosphorylation on 2'-hydroxyl of the adenosine moiety of NAD to yield NADP. The sequence is that of NAD kinase from Burkholderia multivorans (strain ATCC 17616 / 249).